The sequence spans 666 residues: Endogenous retrovirus group K member 9 Gag polyprotein (666 aa).

Gly2 carries the N-myristoyl glycine lipid modification. Positions 165 to 264 (GKGPELVGPS…APPSRQGSEL (100 aa)) are disordered. Residues 232-247 (GMPPAPQGRAPYPQPP) are compositionally biased toward pro residues. 2 CCHC-type zinc fingers span residues 544–561 (GKCYNCGQIGHLKKNCPV) and 580–597 (DLCPRCKKGKHWASQCRS). The interval 598–641 (KFDKNGQPLSGNEQRGQPQAPQQTGAFPIQPFVPQGFQGQQPPL) is disordered. Over residues 604–622 (QPLSGNEQRGQPQAPQQTG) the composition is skewed to polar residues. Low complexity predominate over residues 624 to 640 (FPIQPFVPQGFQGQQPP).

The protein belongs to the beta type-B retroviral Gag protein family. HERV class-II K(HML-2) gag subfamily. Post-translationally, myristoylation is essential for retroviral assembly. Alteration of the glycine residue leads to a block in the budding of particles and an accumulation of Gag inside the cell. Specific enzymatic cleavages may yield mature proteins.

The protein resides in the cell membrane. In terms of biological role, the products of the Gag polyproteins of infectious retroviruses perform highly complex orchestrated tasks during the assembly, budding, maturation, and infection stages of the viral replication cycle. During viral assembly, the proteins form membrane associations and self-associations that ultimately result in budding of an immature virion from the infected cell. Gag precursors also function during viral assembly to selectively bind and package two plus strands of genomic RNA. Endogenous Gag proteins may have kept, lost or modified their original function during evolution. This is Endogenous retrovirus group K member 9 Gag polyprotein (ERVK-9) from Homo sapiens (Human).